Consider the following 346-residue polypeptide: D-alanine--D-alanine ligase (346 aa).

An ATP-grasp domain is found at 125 to 325 (KRIWRSEGLP…YPALCLEVLR (201 aa)). ATP is bound at residue 151–206 (FAALGSPMIVKPDREGSTIGLTKVTQIEQCGAAYALAARHDAMVLCEQFVKGDEVT). Residues D278, E292, and N294 each contribute to the Mg(2+) site.

It belongs to the D-alanine--D-alanine ligase family. The cofactor is Mg(2+). Requires Mn(2+) as cofactor.

It localises to the cytoplasm. It catalyses the reaction 2 D-alanine + ATP = D-alanyl-D-alanine + ADP + phosphate + H(+). It participates in cell wall biogenesis; peptidoglycan biosynthesis. Its function is as follows. Cell wall formation. The chain is D-alanine--D-alanine ligase from Albidiferax ferrireducens (strain ATCC BAA-621 / DSM 15236 / T118) (Rhodoferax ferrireducens).